The following is a 487-amino-acid chain: Homeobox protein homothorax (487 aa).

Disordered regions lie at residues 25–49, 210–292, and 333–369; these read YDPH…HMTH, DTTK…SSLN, and NFGT…QKKR. The MEIS N-terminal domain occupies 127-211; it reads GGDVCSSESF…IDLVIDERDT (85 aa). 2 stretches are compositionally biased toward polar residues: residues 227 to 237 and 333 to 345; these read NADSTSHTDGA and NFGT…ASNA. The segment at residues 365-427 is a DNA-binding region (homeobox; TALE-type); it reads NQKKRGIFPK…NARRRIVQPM (63 aa).

The protein belongs to the TALE/MEIS homeobox family. As to quaternary structure, interacts with exd; required for nuclear translocation of exd. In terms of tissue distribution, in the wing disk, the expression is present in the regions corresponding to notum, wing hinge and ventral pleura. In the leg disk, the expression is in the periphery region, corresponding to the proximal segments of the legs. In the antennal disk, the expression is in all but the arista region. In the eye disk, the expression is strong in the anterior region surrounding the eye field, including the regions corresponding to ptilinum, ocellus and head capsules, and weak in the posterior and lateral margins of the eye disk. Expressed specifically in maturating inner photoreceptors of the DRA and maintained through adulthood.

The protein resides in the nucleus. In terms of biological role, all isoforms are required for patterning of the embryonic cuticle. Acts with exd to delimit the eye field and prevent inappropriate eye development. Isoforms that carry the homeodomain are required for proper localization of chordotonal organs within the peripheral nervous system and antennal identity; required to activate antennal-specific genes, such as sal and to repress the leg-like expression of dac. Necessary for the nuclear localization of the essential HOX cofactor, extradenticle (exd). Both necessary and sufficient for inner photoreceptors to adopt the polarization-sensitive 'dorsal rim area' (DRA) of the eye fate instead of the color-sensitive default state. This occurs by increasing rhabdomere size and uncoupling R7-R8 communication to allow both cells to express the same opsin rather than different ones as required for color vision. This chain is Homeobox protein homothorax, found in Drosophila melanogaster (Fruit fly).